A 433-amino-acid polypeptide reads, in one-letter code: Serine hydroxymethyltransferase (433 aa).

(6S)-5,6,7,8-tetrahydrofolate-binding positions include Leu-131 and Gly-135–Leu-137. Lys-240 is modified (N6-(pyridoxal phosphate)lysine).

Belongs to the SHMT family. As to quaternary structure, homodimer. Pyridoxal 5'-phosphate serves as cofactor.

It is found in the cytoplasm. It carries out the reaction (6R)-5,10-methylene-5,6,7,8-tetrahydrofolate + glycine + H2O = (6S)-5,6,7,8-tetrahydrofolate + L-serine. Its pathway is one-carbon metabolism; tetrahydrofolate interconversion. It functions in the pathway amino-acid biosynthesis; glycine biosynthesis; glycine from L-serine: step 1/1. Its function is as follows. Catalyzes the reversible interconversion of serine and glycine with tetrahydrofolate (THF) serving as the one-carbon carrier. This reaction serves as the major source of one-carbon groups required for the biosynthesis of purines, thymidylate, methionine, and other important biomolecules. Also exhibits THF-independent aldolase activity toward beta-hydroxyamino acids, producing glycine and aldehydes, via a retro-aldol mechanism. This is Serine hydroxymethyltransferase from Bifidobacterium adolescentis (strain ATCC 15703 / DSM 20083 / NCTC 11814 / E194a).